We begin with the raw amino-acid sequence, 539 residues long: G protein-coupled receptor associated sorting protein 3 (539 aa).

Residues 1-10 (MTGSKNKARA) are compositionally biased toward basic residues. Disordered stretches follow at residues 1–112 (MTGS…NWFW) and 134–172 (VAKC…EENV). Composition is skewed to basic and acidic residues over residues 66-80 (VVAE…ESKA) and 88-106 (FNHR…DKPS). Residues 134–146 (VAKCENKPSTSIQ) are compositionally biased toward polar residues.

This sequence belongs to the GPRASP family. In terms of assembly, homodimer.

Its subcellular location is the cytoplasm. The protein localises to the nucleus. In terms of biological role, survival and differentiation promoting protein that plays a role in the regulation of neurosynaptogenesis. Induces phosphatase PP2A activity which results in APP dephosphorylation and inhibits BACE1-mediated processing of APP. This Mus musculus (Mouse) protein is G protein-coupled receptor associated sorting protein 3 (Gprasp3).